Consider the following 84-residue polypeptide: UPF0248 protein Pisl_1919 (84 aa).

It belongs to the UPF0248 family.

The polypeptide is UPF0248 protein Pisl_1919 (Pyrobaculum islandicum (strain DSM 4184 / JCM 9189 / GEO3)).